The primary structure comprises 252 residues: Imidazole glycerol phosphate synthase subunit HisF (252 aa).

Active-site residues include Asp-11 and Asp-130.

It belongs to the HisA/HisF family. In terms of assembly, heterodimer of HisH and HisF.

Its subcellular location is the cytoplasm. The enzyme catalyses 5-[(5-phospho-1-deoxy-D-ribulos-1-ylimino)methylamino]-1-(5-phospho-beta-D-ribosyl)imidazole-4-carboxamide + L-glutamine = D-erythro-1-(imidazol-4-yl)glycerol 3-phosphate + 5-amino-1-(5-phospho-beta-D-ribosyl)imidazole-4-carboxamide + L-glutamate + H(+). It functions in the pathway amino-acid biosynthesis; L-histidine biosynthesis; L-histidine from 5-phospho-alpha-D-ribose 1-diphosphate: step 5/9. IGPS catalyzes the conversion of PRFAR and glutamine to IGP, AICAR and glutamate. The HisF subunit catalyzes the cyclization activity that produces IGP and AICAR from PRFAR using the ammonia provided by the HisH subunit. This chain is Imidazole glycerol phosphate synthase subunit HisF, found in Thermococcus onnurineus (strain NA1).